We begin with the raw amino-acid sequence, 170 residues long: uncharacterized protein (170 aa).

The protein resides in the mitochondrion. This is an uncharacterized protein from Arabidopsis thaliana (Mouse-ear cress).